Reading from the N-terminus, the 93-residue chain is Sec-independent protein translocase protein TatA (93 aa).

Residues 1-21 form a helical membrane-spanning segment; sequence MGAMSPWHWAIVALVVVILFG. Residues 44–93 are disordered; sequence KEMQNDNSTPAPTAQQSAPAELPVADTTTAPVTPPAPVQPQPQHTEPKSA. Low complexity predominate over residues 51-74; that stretch reads STPAPTAQQSAPAELPVADTTTAP.

The protein belongs to the TatA/E family. As to quaternary structure, the Tat system comprises two distinct complexes: a TatABC complex, containing multiple copies of TatA, TatB and TatC subunits, and a separate TatA complex, containing only TatA subunits. Substrates initially bind to the TatABC complex, which probably triggers association of the separate TatA complex to form the active translocon.

The protein localises to the cell membrane. Its function is as follows. Part of the twin-arginine translocation (Tat) system that transports large folded proteins containing a characteristic twin-arginine motif in their signal peptide across membranes. TatA could form the protein-conducting channel of the Tat system. The protein is Sec-independent protein translocase protein TatA of Rhodococcus opacus (strain B4).